The following is a 228-amino-acid chain: 7-cyano-7-deazaguanine synthase (228 aa).

Residue 10-20 (FSGGQDSTTLA) participates in ATP binding. Zn(2+)-binding residues include C190, C205, C208, and C211.

The protein belongs to the QueC family. Zn(2+) is required as a cofactor.

The catalysed reaction is 7-carboxy-7-deazaguanine + NH4(+) + ATP = 7-cyano-7-deazaguanine + ADP + phosphate + H2O + H(+). The protein operates within purine metabolism; 7-cyano-7-deazaguanine biosynthesis. Functionally, catalyzes the ATP-dependent conversion of 7-carboxy-7-deazaguanine (CDG) to 7-cyano-7-deazaguanine (preQ(0)). This is 7-cyano-7-deazaguanine synthase from Helicobacter pylori (strain P12).